We begin with the raw amino-acid sequence, 452 residues long: Ribulose bisphosphate carboxylase large chain (452 aa).

The propeptide occupies 1-2; that stretch reads MS. An N-acetylproline modification is found at proline 3. Lysine 14 carries the post-translational modification N6,N6,N6-trimethyllysine. Residues asparagine 123 and threonine 173 each contribute to the substrate site. Lysine 175 acts as the Proton acceptor in catalysis. Lysine 177 contributes to the substrate binding site. Residues lysine 201, aspartate 203, and glutamate 204 each contribute to the Mg(2+) site. The residue at position 201 (lysine 201) is an N6-carboxylysine. Histidine 294 (proton acceptor) is an active-site residue. The substrate site is built by arginine 295, residue 327, and serine 379.

The protein belongs to the RuBisCO large chain family. Type I subfamily. Heterohexadecamer of 8 large chains and 8 small chains; disulfide-linked. The disulfide link is formed within the large subunit homodimers. Requires Mg(2+) as cofactor. The disulfide bond which can form in the large chain dimeric partners within the hexadecamer appears to be associated with oxidative stress and protein turnover.

It is found in the plastid. Its subcellular location is the chloroplast. It catalyses the reaction 2 (2R)-3-phosphoglycerate + 2 H(+) = D-ribulose 1,5-bisphosphate + CO2 + H2O. The enzyme catalyses D-ribulose 1,5-bisphosphate + O2 = 2-phosphoglycolate + (2R)-3-phosphoglycerate + 2 H(+). Functionally, ruBisCO catalyzes two reactions: the carboxylation of D-ribulose 1,5-bisphosphate, the primary event in carbon dioxide fixation, as well as the oxidative fragmentation of the pentose substrate in the photorespiration process. Both reactions occur simultaneously and in competition at the same active site. The chain is Ribulose bisphosphate carboxylase large chain from Salvadora persica (Toothbrush tree).